The chain runs to 140 residues: ATP synthase epsilon chain (140 aa).

It belongs to the ATPase epsilon chain family. In terms of assembly, F-type ATPases have 2 components, CF(1) - the catalytic core - and CF(0) - the membrane proton channel. CF(1) has five subunits: alpha(3), beta(3), gamma(1), delta(1), epsilon(1). CF(0) has three main subunits: a, b and c.

Its subcellular location is the cell inner membrane. In terms of biological role, produces ATP from ADP in the presence of a proton gradient across the membrane. This Vibrio alginolyticus protein is ATP synthase epsilon chain (atpC).